The sequence spans 144 residues: Deoxyuridine 5'-triphosphate nucleotidohydrolase (144 aa).

Substrate-binding positions include 63–65 (RSG), Asn-76, and 80–82 (TID).

The protein belongs to the dUTPase family. Mg(2+) is required as a cofactor.

The catalysed reaction is dUTP + H2O = dUMP + diphosphate + H(+). Its pathway is pyrimidine metabolism; dUMP biosynthesis; dUMP from dCTP (dUTP route): step 2/2. Functionally, this enzyme is involved in nucleotide metabolism: it produces dUMP, the immediate precursor of thymidine nucleotides and it decreases the intracellular concentration of dUTP so that uracil cannot be incorporated into DNA. The protein is Deoxyuridine 5'-triphosphate nucleotidohydrolase of Bacteroides thetaiotaomicron (strain ATCC 29148 / DSM 2079 / JCM 5827 / CCUG 10774 / NCTC 10582 / VPI-5482 / E50).